The following is an 812-amino-acid chain: Probable E3 ubiquitin-protein ligase hulA (812 aa).

The C2 domain occupies 1 to 109 (MTCSQPNLRV…QMGGDEMLTR (109 aa)). Disordered stretches follow at residues 131–235 (NLST…WERR) and 250–350 (RTTT…YFVD). 4 stretches are compositionally biased toward polar residues: residues 148–165 (MQPS…ASTP), 174–199 (ADPT…STIV), 214–223 (SRTNLSSFED), and 250–267 (RTTT…QTSR). Positions 226 to 259 (GRLPAGWERREDNLGRTYYVDHNTRTTTWTRPSN) constitute a WW 1 domain. Over residues 276 to 291 (LERRAHQSRMLPEDRT) the composition is skewed to basic and acidic residues. Over residues 292–306 (GASSPNLQENQQQAQ) the composition is skewed to polar residues. Residues 307-330 (TPPAGGSASAVSMMATGATTAGTG) are compositionally biased toward low complexity. 2 consecutive WW domains span residues 330-363 (GELP…DPRR) and 390-423 (GPLP…DPRL). The 334-residue stretch at 479–812 (SASDLKKRLM…VEETLGFGQE (334 aa)) folds into the HECT domain. Cys780 serves as the catalytic Glycyl thioester intermediate.

Belongs to the RSP5/NEDD4 family. In terms of assembly, interacts with creD.

The protein resides in the cytoplasm. It carries out the reaction S-ubiquitinyl-[E2 ubiquitin-conjugating enzyme]-L-cysteine + [acceptor protein]-L-lysine = [E2 ubiquitin-conjugating enzyme]-L-cysteine + N(6)-ubiquitinyl-[acceptor protein]-L-lysine.. It functions in the pathway protein modification; protein ubiquitination. Functionally, E3 ubiquitin-protein ligase which accepts ubiquitin from an E2 ubiquitin-conjugating enzyme in the form of a thioester and then directly transfers the ubiquitin to targeted substrates. Probably involved in the regulatory network controlling carbon source utilization. The polypeptide is Probable E3 ubiquitin-protein ligase hulA (hulA) (Aspergillus flavus (strain ATCC 200026 / FGSC A1120 / IAM 13836 / NRRL 3357 / JCM 12722 / SRRC 167)).